The sequence spans 337 residues: Holliday junction branch migration complex subunit RuvB (337 aa).

The segment at 1–180 (MTRLISADKS…FGVISRLEFY (180 aa)) is large ATPase domain (RuvB-L). ATP is bound by residues L19, R20, G61, K64, T65, T66, 127-129 (EDF), R170, Y180, and R217. Residue T65 coordinates Mg(2+). The segment at 181–251 (THDELAFIIT…VADQALALLE (71 aa)) is small ATPAse domain (RuvB-S). Residues 254 to 337 (EMGFDMMDRA…APEPPQGKLF (84 aa)) form a head domain (RuvB-H) region. DNA-binding residues include R309 and R314.

Belongs to the RuvB family. Homohexamer. Forms an RuvA(8)-RuvB(12)-Holliday junction (HJ) complex. HJ DNA is sandwiched between 2 RuvA tetramers; dsDNA enters through RuvA and exits via RuvB. An RuvB hexamer assembles on each DNA strand where it exits the tetramer. Each RuvB hexamer is contacted by two RuvA subunits (via domain III) on 2 adjacent RuvB subunits; this complex drives branch migration. In the full resolvosome a probable DNA-RuvA(4)-RuvB(12)-RuvC(2) complex forms which resolves the HJ.

The protein resides in the cytoplasm. The catalysed reaction is ATP + H2O = ADP + phosphate + H(+). In terms of biological role, the RuvA-RuvB-RuvC complex processes Holliday junction (HJ) DNA during genetic recombination and DNA repair, while the RuvA-RuvB complex plays an important role in the rescue of blocked DNA replication forks via replication fork reversal (RFR). RuvA specifically binds to HJ cruciform DNA, conferring on it an open structure. The RuvB hexamer acts as an ATP-dependent pump, pulling dsDNA into and through the RuvAB complex. RuvB forms 2 homohexamers on either side of HJ DNA bound by 1 or 2 RuvA tetramers; 4 subunits per hexamer contact DNA at a time. Coordinated motions by a converter formed by DNA-disengaged RuvB subunits stimulates ATP hydrolysis and nucleotide exchange. Immobilization of the converter enables RuvB to convert the ATP-contained energy into a lever motion, pulling 2 nucleotides of DNA out of the RuvA tetramer per ATP hydrolyzed, thus driving DNA branch migration. The RuvB motors rotate together with the DNA substrate, which together with the progressing nucleotide cycle form the mechanistic basis for DNA recombination by continuous HJ branch migration. Branch migration allows RuvC to scan DNA until it finds its consensus sequence, where it cleaves and resolves cruciform DNA. This is Holliday junction branch migration complex subunit RuvB from Geobacter sp. (strain M21).